A 264-amino-acid polypeptide reads, in one-letter code: Thiazole synthase (264 aa).

K106 functions as the Schiff-base intermediate with DXP in the catalytic mechanism. 1-deoxy-D-xylulose 5-phosphate-binding positions include G167, 193–194 (AG), and 215–216 (NS).

The protein belongs to the ThiG family. In terms of assembly, homotetramer. Forms heterodimers with either ThiH or ThiS.

It is found in the cytoplasm. It catalyses the reaction [ThiS sulfur-carrier protein]-C-terminal-Gly-aminoethanethioate + 2-iminoacetate + 1-deoxy-D-xylulose 5-phosphate = [ThiS sulfur-carrier protein]-C-terminal Gly-Gly + 2-[(2R,5Z)-2-carboxy-4-methylthiazol-5(2H)-ylidene]ethyl phosphate + 2 H2O + H(+). It functions in the pathway cofactor biosynthesis; thiamine diphosphate biosynthesis. Catalyzes the rearrangement of 1-deoxy-D-xylulose 5-phosphate (DXP) to produce the thiazole phosphate moiety of thiamine. Sulfur is provided by the thiocarboxylate moiety of the carrier protein ThiS. In vitro, sulfur can be provided by H(2)S. In Pseudomonas savastanoi pv. phaseolicola (strain 1448A / Race 6) (Pseudomonas syringae pv. phaseolicola (strain 1448A / Race 6)), this protein is Thiazole synthase.